Reading from the N-terminus, the 182-residue chain is Photosystem I assembly protein Ycf4 (182 aa).

Transmembrane regions (helical) follow at residues 22–42 (WSSVIFLGASGFLLTGLSSYL) and 63–83 (VMCFYGILGLIFSVYLGLTIF).

It belongs to the Ycf4 family.

It localises to the plastid. Its subcellular location is the chloroplast thylakoid membrane. Seems to be required for the assembly of the photosystem I complex. The chain is Photosystem I assembly protein Ycf4 from Oltmannsiellopsis viridis (Marine flagellate).